The sequence spans 548 residues: Viridiflorene synthase (548 aa).

Asp301, Asp305, Asp444, Thr448, and Glu452 together coordinate Mg(2+). The short motif at 301–305 is the DDXXD motif element; the sequence is DDTFD.

It belongs to the terpene synthase family. Tpsa subfamily. Mg(2+) is required as a cofactor. Expressed in stem and leaf trichomes. Detected in roots, fruits and flowers.

Its subcellular location is the cytoplasm. It carries out the reaction (2E,6E)-farnesyl diphosphate = viridiflorene + diphosphate. It functions in the pathway secondary metabolite biosynthesis; terpenoid biosynthesis. Sesquiterpene synthase involved in the production of viridiflorene from (E,E)-farnesyl diphosphate. Can also use (Z,Z)-FPP to make several unidentified sesquiterpenes. This is Viridiflorene synthase from Solanum lycopersicum (Tomato).